The following is a 383-amino-acid chain: Sulfate adenylyltransferase (383 aa).

The protein belongs to the sulfate adenylyltransferase family.

The enzyme catalyses sulfate + ATP + H(+) = adenosine 5'-phosphosulfate + diphosphate. It functions in the pathway sulfur metabolism; hydrogen sulfide biosynthesis; sulfite from sulfate: step 1/3. The chain is Sulfate adenylyltransferase (sat) from Aeropyrum pernix (strain ATCC 700893 / DSM 11879 / JCM 9820 / NBRC 100138 / K1).